The sequence spans 284 residues: 4-diphosphocytidyl-2-C-methyl-D-erythritol kinase (284 aa).

Lys22 is an active-site residue. 104-114 (PVGAGLGGASS) contacts ATP. Asp146 is an active-site residue.

It belongs to the GHMP kinase family. IspE subfamily.

The enzyme catalyses 4-CDP-2-C-methyl-D-erythritol + ATP = 4-CDP-2-C-methyl-D-erythritol 2-phosphate + ADP + H(+). The protein operates within isoprenoid biosynthesis; isopentenyl diphosphate biosynthesis via DXP pathway; isopentenyl diphosphate from 1-deoxy-D-xylulose 5-phosphate: step 3/6. In terms of biological role, catalyzes the phosphorylation of the position 2 hydroxy group of 4-diphosphocytidyl-2C-methyl-D-erythritol. The chain is 4-diphosphocytidyl-2-C-methyl-D-erythritol kinase from Hydrogenobaculum sp. (strain Y04AAS1).